The sequence spans 544 residues: CTP synthase (544 aa).

The interval 1–266 (MIRYIFITGG…DSEVLSHFGI (266 aa)) is amidoligase domain. Serine 13 is a CTP binding site. Serine 13 lines the UTP pocket. Residues 14 to 19 (SLGKGI) and aspartate 71 contribute to the ATP site. Mg(2+) is bound by residues aspartate 71 and glutamate 140. CTP-binding positions include 147–149 (DIE), 187–192 (KTKPTQ), and lysine 223. UTP-binding positions include 187–192 (KTKPTQ) and lysine 223. Residue 239-241 (RDV) coordinates ATP. The Glutamine amidotransferase type-1 domain occupies 292-543 (TIGLVGKYTD…IAAAVKQSRL (252 aa)). Residue glycine 355 participates in L-glutamine binding. Residue cysteine 382 is the Nucleophile; for glutamine hydrolysis of the active site. Residues 383-386 (YGMQ), glutamate 406, and arginine 471 contribute to the L-glutamine site. Catalysis depends on residues histidine 516 and glutamate 518.

The protein belongs to the CTP synthase family. As to quaternary structure, homotetramer.

It carries out the reaction UTP + L-glutamine + ATP + H2O = CTP + L-glutamate + ADP + phosphate + 2 H(+). The catalysed reaction is L-glutamine + H2O = L-glutamate + NH4(+). It catalyses the reaction UTP + NH4(+) + ATP = CTP + ADP + phosphate + 2 H(+). It functions in the pathway pyrimidine metabolism; CTP biosynthesis via de novo pathway; CTP from UDP: step 2/2. With respect to regulation, allosterically activated by GTP, when glutamine is the substrate; GTP has no effect on the reaction when ammonia is the substrate. The allosteric effector GTP functions by stabilizing the protein conformation that binds the tetrahedral intermediate(s) formed during glutamine hydrolysis. Inhibited by the product CTP, via allosteric rather than competitive inhibition. In terms of biological role, catalyzes the ATP-dependent amination of UTP to CTP with either L-glutamine or ammonia as the source of nitrogen. Regulates intracellular CTP levels through interactions with the four ribonucleotide triphosphates. The protein is CTP synthase of Hyphomonas neptunium (strain ATCC 15444).